The sequence spans 70 residues: MPRKIEEIKDFLLTARRKDAKSVKIKKNKDNVKFKVRCSRYLYTLVITDKEKAEKLKQSLPPGLAVKDLK.

K4 participates in a covalent cross-link: Glycyl lysine isopeptide (Lys-Gly) (interchain with G-Cter in SUMO2). An N6-acetyllysine; alternate modification is found at K9. A Glycyl lysine isopeptide (Lys-Gly) (interchain with G-Cter in SUMO2); alternate cross-link involves residue K9. K67 carries the post-translational modification N6-acetyllysine.

The protein belongs to the eukaryotic ribosomal protein eL38 family. Component of the large ribosomal subunit.

The protein resides in the cytoplasm. Functionally, component of the large ribosomal subunit. The ribosome is a large ribonucleoprotein complex responsible for the synthesis of proteins in the cell. The sequence is that of Large ribosomal subunit protein eL38 (Rpl38) from Mus musculus (Mouse).